The chain runs to 860 residues: Semaphorin-3aa (860 aa).

Residues methionine 1 to proline 17 form the signal peptide. The Sema domain maps to arginine 31–leucine 515. A glycan (N-linked (GlcNAc...) asparagine) is linked at asparagine 53. An intrachain disulfide couples cysteine 104 to cysteine 115. Asparagine 126 is a glycosylation site (N-linked (GlcNAc...) asparagine). 4 disulfides stabilise this stretch: cysteine 133–cysteine 142, cysteine 270–cysteine 382, cysteine 294–cysteine 342, and cysteine 518–cysteine 536. Residues glycine 579–leucine 668 form the Ig-like C2-type domain. Asparagine 593 carries an N-linked (GlcNAc...) asparagine glycan. Cysteine 652 and cysteine 717 are joined by a disulfide. The tract at residues lysine 725–valine 860 is disordered. Composition is skewed to polar residues over residues threonine 748–glutamine 764 and threonine 782–glutamine 818. Basic and acidic residues predominate over residues glutamine 838–valine 860.

Belongs to the semaphorin family.

The protein localises to the secreted. Functionally, may influence outgrowth by a variety of growth cones including those of the posterior lateral line ganglion. The chain is Semaphorin-3aa (sema3aa) from Danio rerio (Zebrafish).